We begin with the raw amino-acid sequence, 417 residues long: MEHLKTQDPAVFEAIRQELGRQRDKIELIASENFVSEAVMEAQGSVLTNKYAEGYPGRRYYGGCEYVDIAEDVARDRAKQLFGAAYVNVQPHSGAQANMGVYFTILEHGDTVLGMNLSHGGHLTHGSPVNFSGIQYRFVEYGVREDDKRIDYEAVREAAKTHQPKLIVAGASAYPREIDFKKFREIADEVGAYLMVDMAHIAGLVAAGLHQNPVPYAHFVTTTTHKTLRGPRGGMILCNEETAEEFGKKLDKSIFPGIQGGPLMHVIAAKAVAFGEALSDEFKTYAKQIIANAKRLGEKLQAEGVDIVSGGTDNHLLLLDLRSLQLTGKVAEKALDAVGITTNKNAIPFDPEKPFVTSGIRIGTAAVTSRGFGENEMDEIGELIALTLKNIDNEEALNSVRSRVAALTKTFPMYPNL.

(6S)-5,6,7,8-tetrahydrofolate-binding positions include Leu117 and 121–123; that span reads GHL. Lys226 carries the N6-(pyridoxal phosphate)lysine modification.

This sequence belongs to the SHMT family. As to quaternary structure, homodimer. Pyridoxal 5'-phosphate serves as cofactor.

The protein localises to the cytoplasm. The catalysed reaction is (6R)-5,10-methylene-5,6,7,8-tetrahydrofolate + glycine + H2O = (6S)-5,6,7,8-tetrahydrofolate + L-serine. It participates in one-carbon metabolism; tetrahydrofolate interconversion. The protein operates within amino-acid biosynthesis; glycine biosynthesis; glycine from L-serine: step 1/1. Functionally, catalyzes the reversible interconversion of serine and glycine with tetrahydrofolate (THF) serving as the one-carbon carrier. This reaction serves as the major source of one-carbon groups required for the biosynthesis of purines, thymidylate, methionine, and other important biomolecules. Also exhibits THF-independent aldolase activity toward beta-hydroxyamino acids, producing glycine and aldehydes, via a retro-aldol mechanism. In Shouchella clausii (strain KSM-K16) (Alkalihalobacillus clausii), this protein is Serine hydroxymethyltransferase.